We begin with the raw amino-acid sequence, 513 residues long: Solute carrier family 2, facilitated glucose transporter member 10 (513 aa).

Over 1–6 (MGCSVL) the chain is Cytoplasmic. A helical transmembrane segment spans residues 7-27 (LLTITVSTLGGLVFGYELGII). Residues 28–46 (SGALPQLQTHFSLGCVQQE) are Extracellular-facing. The helical transmembrane segment at 47–67 (AVVSALLIGSLFASIIGGWLI) threads the bilayer. Residues 68–80 (DRHGRRTSILLSN) lie on the Cytoplasmic side of the membrane. A helical membrane pass occupies residues 81–101 (LLILAGSVILTTGTSFFALVI). Topologically, residues 102–104 (GRA) are extracellular. Residues 105 to 125 (VIGFAMTVSSMSCCIFVSEMV) form a helical membrane-spanning segment. The Cytoplasmic segment spans residues 126 to 130 (TPERR). A helical membrane pass occupies residues 131 to 151 (GLMVTLYEVGITVGILIAYAV). Topologically, residues 152-164 (NYIFNNVPLTGWR) are extracellular. A helical transmembrane segment spans residues 165–185 (YMFGFAIIPSLIQLASIVLLP). The Cytoplasmic segment spans residues 186–236 (KQAEVFVIHDDDSRQADRLTEETETSNQHQQSEKYGVSDLFKSKDNMRRRT). A helical transmembrane segment spans residues 237–257 (VIGVGLVLSQQFTGQPNVLFY). 246–247 (QQ) serves as a coordination point for D-glucose. Residues 258–272 (ASTILFSVGFQSNAS) lie on the Extracellular side of the membrane. An N-linked (GlcNAc...) asparagine glycan is attached at Asn270. The helical transmembrane segment at 273-293 (AILASVGFGIVKVIATLLAML) threads the bilayer. Topologically, residues 294–301 (CSDRAGRR) are cytoplasmic. Residues 302–322 (SLLIGGCSMLAVGLILTGFLC) form a helical membrane-spanning segment. Residues 323–376 (RQSVIDTTKRCTSVGPHSNLTLSAEHDEGVGFSSQTLDVHEHLRSFSQSEDIYK) lie on the Extracellular side of the membrane. N-linked (GlcNAc...) asparagine glycosylation occurs at Asn341. A helical transmembrane segment spans residues 377–397 (WIIFTCLMAVVSAFSVSFGPM). The Cytoplasmic segment spans residues 398 to 422 (TWVVLSEIFPKDIRGRAFSFINCFN). A D-glucose-binding site is contributed by Trp399. 2 helical membrane passes run 423-443 (VGAN…IGLS) and 444-464 (GVFL…YLVL). The Cytoplasmic segment spans residues 465-513 (PETKGKSLQDIDRELSQTRMIHRQELCSIFQRRRFSPGYQRVQLTSTAT).

The protein belongs to the major facilitator superfamily. Sugar transporter (TC 2.A.1.1) family. Glucose transporter subfamily.

Its subcellular location is the endomembrane system. It localises to the cytoplasm. The protein resides in the perinuclear region. It catalyses the reaction D-glucose(out) = D-glucose(in). Facilitative glucose transporter required for the development of the cardiovascular system. The chain is Solute carrier family 2, facilitated glucose transporter member 10 from Danio rerio (Zebrafish).